The chain runs to 173 residues: Large ribosomal subunit protein uL10 (173 aa).

The protein belongs to the universal ribosomal protein uL10 family. Part of the ribosomal stalk of the 50S ribosomal subunit. The N-terminus interacts with L11 and the large rRNA to form the base of the stalk. The C-terminus forms an elongated spine to which L12 dimers bind in a sequential fashion forming a multimeric L10(L12)X complex.

In terms of biological role, forms part of the ribosomal stalk, playing a central role in the interaction of the ribosome with GTP-bound translation factors. The polypeptide is Large ribosomal subunit protein uL10 (rplJ) (Synechocystis sp. (strain ATCC 27184 / PCC 6803 / Kazusa)).